The sequence spans 260 residues: Indole-3-glycerol phosphate synthase (260 aa).

Belongs to the TrpC family.

The catalysed reaction is 1-(2-carboxyphenylamino)-1-deoxy-D-ribulose 5-phosphate + H(+) = (1S,2R)-1-C-(indol-3-yl)glycerol 3-phosphate + CO2 + H2O. The protein operates within amino-acid biosynthesis; L-tryptophan biosynthesis; L-tryptophan from chorismate: step 4/5. In Neisseria meningitidis serogroup C / serotype 2a (strain ATCC 700532 / DSM 15464 / FAM18), this protein is Indole-3-glycerol phosphate synthase.